The primary structure comprises 242 residues: Putative ABC transporter ATP-binding protein TTE0246 (242 aa).

In terms of domain architecture, ABC transporter spans 5–242 (FELKNVSYFY…EKLLLKANLI (238 aa)). 38–45 (GANGSGKS) contributes to the ATP binding site.

This sequence belongs to the ABC transporter superfamily.

It localises to the cell membrane. Probably part of an ABC transporter complex. Responsible for energy coupling to the transport system. This chain is Putative ABC transporter ATP-binding protein TTE0246, found in Caldanaerobacter subterraneus subsp. tengcongensis (strain DSM 15242 / JCM 11007 / NBRC 100824 / MB4) (Thermoanaerobacter tengcongensis).